Consider the following 1163-residue polypeptide: Rho GTPase-activating protein 45 (1163 aa).

A disordered region spans residues 1 to 99; it reads MFSRKKRELM…KRPTSLSRHA (99 aa). Phosphoserine is present on residues Ser23 and Ser25. The span at 55-65 shows a compositional bias: basic and acidic residues; that stretch reads LPKELPRKDGA. Ser100, Ser120, and Ser126 each carry phosphoserine. Disordered stretches follow at residues 118–137, 262–282, and 454–475; these read HRSP…GTGP, PPGD…EGTP, and EEEQ…LDKR. Positions 296-566 constitute an F-BAR domain; the sequence is EEVDVLLQRC…SSKLYDPGQQ (271 aa). Positions 403–526 form a coiled coil; it reads EHEKRRKEIK…QIQEVIRQSD (124 aa). Over residues 458–470 the composition is skewed to low complexity; the sequence is AGTAPGAGSTATK. Residues Ser596, Ser605, and Ser619 each carry the phosphoserine modification. The tract at residues 610-695 is disordered; sequence DVAGPEAAGS…VDPEGGAGAS (86 aa). The span at 633-644 shows a compositional bias: basic residues; it reads KGHRAGRGHQVH. At Ser646 the chain carries Phosphoserine. The span at 673-682 shows a compositional bias: low complexity; the sequence is TSSSGTMSST. The segment at 729 to 774 adopts a Phorbol-ester/DAG-type zinc-finger fold; it reads THRLRKLRTPAKCRECNSYVYFQGAECEECCLACHKKCLETLAIQC. The Rho-GAP domain occupies 788–1001; that stretch reads QDFSHAARSA…TLIVHYGLVF (214 aa). 4 positions are modified to phosphoserine: Ser976, Ser1054, Ser1057, and Ser1059. Disordered regions lie at residues 1042–1067 and 1087–1163; these read AAED…ASEL and SEAS…PEFV. Over residues 1087–1099 the composition is skewed to low complexity; the sequence is SEASLEEASGSHS. Residues 1125 to 1137 show a composition bias toward polar residues; it reads SGFNTNQSNNVLQ.

The protein localises to the cytoplasm. Its subcellular location is the cell projection. It localises to the ruffle membrane. Functionally, contains a GTPase activator for the Rho-type GTPases (RhoGAP) domain that would be able to negatively regulate the actin cytoskeleton as well as cell spreading. However, also contains N-terminally a BAR-domin which is able to play an autoinhibitory effect on this RhoGAP activity. The sequence is that of Rho GTPase-activating protein 45 from Pongo abelii (Sumatran orangutan).